We begin with the raw amino-acid sequence, 157 residues long: Tripartite terminase subunit 2 (157 aa).

Residues 1-69 (MSWAKQRVPF…DGEDGHALPD (69 aa)) are disordered. The span at 11–27 (LDDDDGEEENDVQDDVD) shows a compositional bias: acidic residues.

It belongs to the herpesviridae TRM2 protein family. In terms of assembly, associates with TRM1 and TRM3 to form the tripartite terminase complex.

It is found in the host nucleus. In terms of biological role, component of the molecular motor that translocates viral genomic DNA in empty capsid during DNA packaging. Forms a tripartite terminase complex together with TRM1 and TRM3 in the host cytoplasm. Once the complex reaches the host nucleus, it interacts with the capsid portal vertex. This portal forms a ring in which genomic DNA is translocated into the capsid. This chain is Tripartite terminase subunit 2, found in Homo sapiens (Human).